The following is a 444-amino-acid chain: Putative F-box protein At1g64540 (444 aa).

The F-box domain occupies 4 to 50; sequence REFISNLPDEILGKILSLLPTKLGVSTSVLSKRWRNLILLVDNFDLE.

The protein is Putative F-box protein At1g64540 of Arabidopsis thaliana (Mouse-ear cress).